The following is an 85-amino-acid chain: Protein C4 (85 aa).

The N-myristoyl glycine; by host moiety is linked to residue Gly2. The segment at 42 to 65 (LNPAPTSTPTSTRTETLSNGENSR) is disordered. Over residues 44 to 59 (PAPTSTPTSTRTETLS) the composition is skewed to low complexity.

This sequence belongs to the geminiviridae protein AC4/C4 family.

The protein resides in the host cell membrane. Its function is as follows. Pathogenicity determinant. May act as a suppressor of RNA-mediated gene silencing, also known as post-transcriptional gene silencing (PTGS), a mechanism of plant viral defense that limits the accumulation of viral RNAs. This chain is Protein C4, found in Solanum lycopersicum (Tomato).